Reading from the N-terminus, the 169-residue chain is 3-hydroxyacyl-[acyl-carrier-protein] dehydratase FabZ (169 aa).

His-74 is a catalytic residue.

Belongs to the thioester dehydratase family. FabZ subfamily.

The protein resides in the cytoplasm. It carries out the reaction a (3R)-hydroxyacyl-[ACP] = a (2E)-enoyl-[ACP] + H2O. Involved in unsaturated fatty acids biosynthesis. Catalyzes the dehydration of short chain beta-hydroxyacyl-ACPs and long chain saturated and unsaturated beta-hydroxyacyl-ACPs. The protein is 3-hydroxyacyl-[acyl-carrier-protein] dehydratase FabZ of Gluconobacter oxydans (strain 621H) (Gluconobacter suboxydans).